The primary structure comprises 330 residues: Glycerol-3-phosphate dehydrogenase [NAD(P)+] (330 aa).

Residues W11, R33, and K105 each coordinate NADPH. 3 residues coordinate sn-glycerol 3-phosphate: K105, G133, and S135. A137 is an NADPH binding site. Residues K188, D241, S251, R252, and N253 each coordinate sn-glycerol 3-phosphate. The active-site Proton acceptor is the K188. Residue R252 coordinates NADPH. Positions 276 and 278 each coordinate NADPH.

The protein belongs to the NAD-dependent glycerol-3-phosphate dehydrogenase family.

It is found in the cytoplasm. It catalyses the reaction sn-glycerol 3-phosphate + NAD(+) = dihydroxyacetone phosphate + NADH + H(+). The enzyme catalyses sn-glycerol 3-phosphate + NADP(+) = dihydroxyacetone phosphate + NADPH + H(+). It functions in the pathway membrane lipid metabolism; glycerophospholipid metabolism. Catalyzes the reduction of the glycolytic intermediate dihydroxyacetone phosphate (DHAP) to sn-glycerol 3-phosphate (G3P), the key precursor for phospholipid synthesis. This is Glycerol-3-phosphate dehydrogenase [NAD(P)+] from Acidovorax sp. (strain JS42).